The following is a 249-amino-acid chain: Ribonuclease HII (249 aa).

Positions 30 to 221 (GPVAGVDEVG…VRRLVMDGEP (192 aa)) constitute an RNase H type-2 domain. 3 residues coordinate a divalent metal cation: D36, E37, and D130.

It belongs to the RNase HII family. The cofactor is Mn(2+). Requires Mg(2+) as cofactor.

The protein localises to the cytoplasm. The enzyme catalyses Endonucleolytic cleavage to 5'-phosphomonoester.. Its function is as follows. Endonuclease that specifically degrades the RNA of RNA-DNA hybrids. The sequence is that of Ribonuclease HII from Mycolicibacterium vanbaalenii (strain DSM 7251 / JCM 13017 / BCRC 16820 / KCTC 9966 / NRRL B-24157 / PYR-1) (Mycobacterium vanbaalenii).